We begin with the raw amino-acid sequence, 556 residues long: 5-aminolevulinate synthase, mitochondrial (556 aa).

The N-terminal 46 residues, 1–46, are a transit peptide targeting the mitochondrion; the sequence is MDSLARQSAKICPFVSRVTSSMQQVQVLHKTNMSAMAQQCPVMRRA. Substrate is bound by residues Arg-105, Ser-218, and Lys-237. 3 residues coordinate pyridoxal 5'-phosphate: Ser-270, His-298, and Thr-342. Lys-345 is an active-site residue. Position 345 is an N6-(pyridoxal phosphate)lysine (Lys-345). The pyridoxal 5'-phosphate site is built by Thr-374 and Ser-375. Thr-460 contacts substrate.

Belongs to the class-II pyridoxal-phosphate-dependent aminotransferase family. Homodimer. Pyridoxal 5'-phosphate serves as cofactor.

The protein resides in the mitochondrion matrix. The enzyme catalyses succinyl-CoA + glycine + H(+) = 5-aminolevulinate + CO2 + CoA. It participates in porphyrin-containing compound metabolism; protoporphyrin-IX biosynthesis; 5-aminolevulinate from glycine: step 1/1. In terms of biological role, catalyzes the synthesis of 5-aminolevulinate (ALA) from succinyl-CoA and glycine, the first and rate-limiting step in heme biosynthesis. The chain is 5-aminolevulinate synthase, mitochondrial (HEM1) from Eremothecium gossypii (strain ATCC 10895 / CBS 109.51 / FGSC 9923 / NRRL Y-1056) (Yeast).